Consider the following 189-residue polypeptide: Large ribosomal subunit protein uL5 (189 aa).

The protein belongs to the universal ribosomal protein uL5 family. Part of the 50S ribosomal subunit; part of the 5S rRNA/L5/L18/L25 subcomplex. Contacts the 5S rRNA and the P site tRNA. Forms a bridge to the 30S subunit in the 70S ribosome.

This is one of the proteins that bind and probably mediate the attachment of the 5S RNA into the large ribosomal subunit, where it forms part of the central protuberance. In the 70S ribosome it contacts protein S13 of the 30S subunit (bridge B1b), connecting the 2 subunits; this bridge is implicated in subunit movement. Contacts the P site tRNA; the 5S rRNA and some of its associated proteins might help stabilize positioning of ribosome-bound tRNAs. The polypeptide is Large ribosomal subunit protein uL5 (Kocuria rhizophila (strain ATCC 9341 / DSM 348 / NBRC 103217 / DC2201)).